A 747-amino-acid chain; its full sequence is Protein O-mannosyl-transferase 1 (747 aa).

A run of 9 helical transmembrane segments spans residues 8 to 28 (PVVVTADINLSLVALTGMGLL), 40 to 60 (VVFDEVYYGQYISFYMKQIFF), 68 to 88 (FGHMVLALGGYLGGFDGNFLW), 99 to 119 (VPVWSLRLLPALAGALSVPMA), 122 to 142 (IVLELHFSHCAAMGAALLMLI), 154 to 174 (LLESVLIFFNLLAVLSYLKFF), 183 to 203 (SLSWWFWLTLTGVACSCAVGI), 206 to 226 (MGVFTYVLVLGVAAVHAWHLL), and 269 to 289 (LLVIPVVLYLLFFYVHLILVF). MIR domains follow at residues 318–381 (PLEV…VKDP), 392–449 (PRPV…LEIV), and 453–513 (SDTD…VEEH). Residues Asn435, Asn471, and Asn539 are each glycosylated (N-linked (GlcNAc...) asparagine). 3 consecutive transmembrane segments (helical) span residues 597 to 617 (IVIWVSGSLALAIYALLSLWY), 636 to 656 (WVLAGALCAGGWAVNYLPFFL), and 661 to 681 (LFLYHYLPALTFQILLLPVVL).

Belongs to the glycosyltransferase 39 family. As to quaternary structure, interacts with POMT2. As to expression, widely expressed. Highly expressed in testis, heart and pancreas. Detected at lower levels in kidney, skeletal muscle, brain, placenta, lung and liver.

The protein localises to the endoplasmic reticulum membrane. It catalyses the reaction a di-trans,poly-cis-dolichyl beta-D-mannosyl phosphate + L-seryl-[protein] = 3-O-(alpha-D-mannosyl)-L-seryl-[protein] + a di-trans,poly-cis-dolichyl phosphate + H(+). The enzyme catalyses a di-trans,poly-cis-dolichyl beta-D-mannosyl phosphate + L-threonyl-[protein] = 3-O-(alpha-D-mannosyl)-L-threonyl-[protein] + a di-trans,poly-cis-dolichyl phosphate + H(+). It functions in the pathway protein modification; protein glycosylation. Its activity is regulated as follows. Slightly activated by Mg(2+) and inhibited by both Ca(+) and Mn(2+). EDTA ha no effect on activity in vitro. Its function is as follows. Transfers mannosyl residues to the hydroxyl group of serine or threonine residues. Coexpression of both POMT1 and POMT2 is necessary for enzyme activity, expression of either POMT1 or POMT2 alone is insufficient. Essentially dedicated to O-mannosylation of alpha-DAG1 and few other proteins but not of cadherins and protocaherins. This is Protein O-mannosyl-transferase 1 (POMT1) from Homo sapiens (Human).